The following is a 145-amino-acid chain: Holo-[acyl-carrier-protein] synthase (145 aa).

Mg(2+) contacts are provided by D9 and E59.

The protein belongs to the P-Pant transferase superfamily. AcpS family. Requires Mg(2+) as cofactor.

The protein resides in the cytoplasm. It carries out the reaction apo-[ACP] + CoA = holo-[ACP] + adenosine 3',5'-bisphosphate + H(+). In terms of biological role, transfers the 4'-phosphopantetheine moiety from coenzyme A to a Ser of acyl-carrier-protein. The polypeptide is Holo-[acyl-carrier-protein] synthase (Nocardia farcinica (strain IFM 10152)).